Consider the following 172-residue polypeptide: 3-phenylpropionate/cinnamic acid dioxygenase subunit beta (172 aa).

This sequence belongs to the bacterial ring-hydroxylating dioxygenase beta subunit family. This dioxygenase system consists of four proteins: the two subunits of the hydroxylase component (HcaE and HcaF), a ferredoxin (HcaC) and a ferredoxin reductase (HcaD).

It catalyses the reaction 3-phenylpropanoate + NADH + O2 + H(+) = 3-(cis-5,6-dihydroxycyclohexa-1,3-dien-1-yl)propanoate + NAD(+). It carries out the reaction (E)-cinnamate + NADH + O2 + H(+) = (2E)-3-(cis-5,6-dihydroxycyclohexa-1,3-dien-1-yl)prop-2-enoate + NAD(+). It participates in aromatic compound metabolism; 3-phenylpropanoate degradation. Functionally, part of the multicomponent 3-phenylpropionate dioxygenase. Converts 3-phenylpropionic acid (PP) and cinnamic acid (CI) into 3-phenylpropionate-dihydrodiol (PP-dihydrodiol) and cinnamic acid-dihydrodiol (CI-dihydrodiol), respectively. The sequence is that of 3-phenylpropionate/cinnamic acid dioxygenase subunit beta from Shigella flexneri serotype 5b (strain 8401).